The following is a 119-amino-acid chain: Protein TusC (119 aa).

The protein belongs to the DsrF/TusC family. As to quaternary structure, heterohexamer, formed by a dimer of trimers. The hexameric TusBCD complex contains 2 copies each of TusB, TusC and TusD. The TusBCD complex interacts with TusE.

The protein localises to the cytoplasm. Part of a sulfur-relay system required for 2-thiolation of 5-methylaminomethyl-2-thiouridine (mnm(5)s(2)U) at tRNA wobble positions. This is Protein TusC from Pectobacterium atrosepticum (strain SCRI 1043 / ATCC BAA-672) (Erwinia carotovora subsp. atroseptica).